The sequence spans 310 residues: N-acetyl-gamma-glutamyl-phosphate reductase (310 aa).

Residue C117 is part of the active site.

It belongs to the NAGSA dehydrogenase family. Type 2 subfamily.

Its subcellular location is the cytoplasm. It catalyses the reaction N-acetyl-L-glutamate 5-semialdehyde + phosphate + NADP(+) = N-acetyl-L-glutamyl 5-phosphate + NADPH + H(+). It participates in amino-acid biosynthesis; L-arginine biosynthesis; N(2)-acetyl-L-ornithine from L-glutamate: step 3/4. Catalyzes the NADPH-dependent reduction of N-acetyl-5-glutamyl phosphate to yield N-acetyl-L-glutamate 5-semialdehyde. The sequence is that of N-acetyl-gamma-glutamyl-phosphate reductase from Brucella melitensis biotype 1 (strain ATCC 23456 / CCUG 17765 / NCTC 10094 / 16M).